Reading from the N-terminus, the 207-residue chain is MNEFIYPEARLIAGVDEVGRGPLVGAVVTAAVILDPSRPIVGLGDSKKLSEKRRLALYDEIKDKALSWSLGRAEPEEIDQLNILHATMLAMQRAVAGLHLSPDFVLIDGNRCPALAMPSRAVVKGDSLVPEISAASILAKVTRDREMCELDLQYPQYGFARHKGYPTAVHVEKLAQFGATPQHRRSFAPVRNALLDAELAAAVARTL.

Residues 10-199 (RLIAGVDEVG…VRNALLDAEL (190 aa)) enclose the RNase H type-2 domain. A divalent metal cation-binding residues include Asp16, Glu17, and Asp108.

This sequence belongs to the RNase HII family. It depends on Mn(2+) as a cofactor. Requires Mg(2+) as cofactor.

Its subcellular location is the cytoplasm. The enzyme catalyses Endonucleolytic cleavage to 5'-phosphomonoester.. Its function is as follows. Endonuclease that specifically degrades the RNA of RNA-DNA hybrids. The protein is Ribonuclease HII of Erwinia tasmaniensis (strain DSM 17950 / CFBP 7177 / CIP 109463 / NCPPB 4357 / Et1/99).